A 522-amino-acid chain; its full sequence is Maturase K (522 aa).

The protein belongs to the intron maturase 2 family. MatK subfamily.

Its subcellular location is the plastid. It localises to the chloroplast. In terms of biological role, usually encoded in the trnK tRNA gene intron. Probably assists in splicing its own and other chloroplast group II introns. The chain is Maturase K from Schizorhiza neglecta (Lapeirousia neglecta).